Consider the following 329-residue polypeptide: Phospholipid scramblase 4 (329 aa).

The disordered stretch occupies residues 1–51 (MSGVVPTAPEQPAGEMENQTKPPDPRPDAPPEYNSHFLPGPPGTAVPPPTG). A proline-rich domain (PRD) region spans residues 1 to 98 (MSGVVPTAPE…PMPNQSVPIT (98 aa)). Residues 1 to 303 (MSGVVPTAPE…IHFPLDLDVK (303 aa)) are Cytoplasmic-facing. The SH3-binding 1 motif lies at 18-25 (NQTKPPDP). A PPxY motif motif is present at residues 30–33 (PPEY). Pro residues predominate over residues 39–51 (PGPPGTAVPPPTG). Residues 41-49 (PPGTAVPPP) carry the SH3-binding 2 motif. Residues Tyr83 and Tyr88 each carry the phosphotyrosine; by ABL modification. The SH3-binding 3 signature appears at 98–106 (TWMPGPTPM). S-palmitoyl cysteine attachment occurs at residues Cys197, Cys198, Cys199, Cys201, and Cys202. The short motif at 271 to 283 (NIGSIIRKWNGLL) is the Nuclear localization signal element. The helical transmembrane segment at 304–320 (MKAMIFGACFLIDFMYF) threads the bilayer. The Extracellular portion of the chain corresponds to 321 to 329 (ERSPPQRSR).

The protein belongs to the phospholipid scramblase family. In terms of assembly, interacts with PDCD6. Interacts with KPNA2; this interaction mediates the nucleus import of PLSCR4. It depends on Ca(2+) as a cofactor. Requires Mg(2+) as cofactor. Zn(2+) serves as cofactor. Expressed in heart, brain, placenta, lung, liver, kidney, pancreas, spleen, thymus, prostate, testis, uterus, small intestine and colon. Not detected in peripheral blood lymphocytes.

The protein localises to the cell membrane. Its subcellular location is the nucleus. It carries out the reaction a 1,2-diacyl-sn-glycero-3-phosphocholine(in) = a 1,2-diacyl-sn-glycero-3-phosphocholine(out). The catalysed reaction is a 1,2-diacyl-sn-glycero-3-phospho-L-serine(in) = a 1,2-diacyl-sn-glycero-3-phospho-L-serine(out). Functionally, catalyzes metal ion-induced ATP-independent rapid bidirectional and non-specific movement of phospholipids (lipid scrambling or lipid flip-flop) between the inner and outer leaflet of the plasma membrane and participates in the redistribution of phospholipids between membrane leaflets. Metal ions bind to the calcium-binding site and induce conformation change in the protein. Has a greater affi nity for Ca(2+) than Mg(2+) and Zn(2+). The chain is Phospholipid scramblase 4 from Homo sapiens (Human).